The following is a 203-amino-acid chain: Na(+)-translocating NADH-quinone reductase subunit E (203 aa).

Transmembrane regions (helical) follow at residues 12-32, 36-56, 82-102, 115-135, 145-165, and 181-201; these read AVFV…FLAL, MEAA…TVPV, FLGL…LEMV, GVFL…LFMV, LVYG…LAGI, and LGIT…FSGI.

Belongs to the NqrDE/RnfAE family. As to quaternary structure, composed of six subunits; NqrA, NqrB, NqrC, NqrD, NqrE and NqrF.

It localises to the cell inner membrane. The enzyme catalyses a ubiquinone + n Na(+)(in) + NADH + H(+) = a ubiquinol + n Na(+)(out) + NAD(+). Its function is as follows. NQR complex catalyzes the reduction of ubiquinone-1 to ubiquinol by two successive reactions, coupled with the transport of Na(+) ions from the cytoplasm to the periplasm. NqrA to NqrE are probably involved in the second step, the conversion of ubisemiquinone to ubiquinol. The polypeptide is Na(+)-translocating NADH-quinone reductase subunit E (Hahella chejuensis (strain KCTC 2396)).